We begin with the raw amino-acid sequence, 233 residues long: Isoprenyl transferase (233 aa).

The active site involves D12. Mg(2+) is bound at residue D12. Residues 13-16, W17, R25, H29, and 57-59 each bind substrate; these read GNGR and STE. The Proton acceptor role is filled by N60. Substrate is bound by residues W61, R63, R178, and 184–186; that span reads RLS. E197 lines the Mg(2+) pocket.

It belongs to the UPP synthase family. As to quaternary structure, homodimer. Mg(2+) serves as cofactor.

Catalyzes the condensation of isopentenyl diphosphate (IPP) with allylic pyrophosphates generating different type of terpenoids. The polypeptide is Isoprenyl transferase (Thermotoga maritima (strain ATCC 43589 / DSM 3109 / JCM 10099 / NBRC 100826 / MSB8)).